A 637-amino-acid polypeptide reads, in one-letter code: Biosynthetic arginine decarboxylase (637 aa).

Residue Lys-101 is modified to N6-(pyridoxal phosphate)lysine. Residue 286-296 participates in substrate binding; sequence FDVGGGLAVDY.

The protein belongs to the Orn/Lys/Arg decarboxylase class-II family. SpeA subfamily. Requires Mg(2+) as cofactor. The cofactor is pyridoxal 5'-phosphate.

It catalyses the reaction L-arginine + H(+) = agmatine + CO2. The protein operates within amine and polyamine biosynthesis; agmatine biosynthesis; agmatine from L-arginine: step 1/1. Its function is as follows. Catalyzes the biosynthesis of agmatine from arginine. The protein is Biosynthetic arginine decarboxylase of Shewanella sp. (strain ANA-3).